The primary structure comprises 506 residues: Ribose import ATP-binding protein RbsA 2 (506 aa).

ABC transporter domains are found at residues 5–241 (LRLS…VGRR) and 254–498 (ADAP…TAGT). Residue 37 to 44 (GENGAGKS) participates in ATP binding.

This sequence belongs to the ABC transporter superfamily. Ribose importer (TC 3.A.1.2.1) family. The complex is composed of an ATP-binding protein (RbsA), two transmembrane proteins (RbsC) and a solute-binding protein (RbsB).

Its subcellular location is the cell inner membrane. It catalyses the reaction D-ribose(out) + ATP + H2O = D-ribose(in) + ADP + phosphate + H(+). Its function is as follows. Part of the ABC transporter complex RbsABC involved in ribose import. Responsible for energy coupling to the transport system. This is Ribose import ATP-binding protein RbsA 2 from Burkholderia cenocepacia (strain HI2424).